We begin with the raw amino-acid sequence, 351 residues long: MITLAVDAMGGDQGLAVTVPGATAFLQAHPDVRLIMTGDETQLRQALTAAGAPMERIDICHTTQVVGMDESPQSALKNKKDSSMRVAINQVKEGKAQAAVSAGNTGALMATARFVLKTIPGIERPAIAKFLPSDTDHVTLALDLGANVDCTPEQLAQFAVIGSELVHALHPQKGQPRVGLVNVGTEDIKGTDTVKQTYKLLQNSKLNFIGNIESNGILYGEADVVVADGFVGNVMLKTIEGAVKFMSGAIRREFQSNLFNKLAAVAALPALKGLKNKLDPRKFNGAILLGLRGIVIKSHGGTDETGFRYALEEAYHEAKSAGLSKIEQGVAEQLAALETAKAVQNENADGL.

The protein belongs to the PlsX family. As to quaternary structure, homodimer. Probably interacts with PlsY.

The protein resides in the cytoplasm. The catalysed reaction is a fatty acyl-[ACP] + phosphate = an acyl phosphate + holo-[ACP]. The protein operates within lipid metabolism; phospholipid metabolism. Its function is as follows. Catalyzes the reversible formation of acyl-phosphate (acyl-PO(4)) from acyl-[acyl-carrier-protein] (acyl-ACP). This enzyme utilizes acyl-ACP as fatty acyl donor, but not acyl-CoA. This is Phosphate acyltransferase from Neisseria meningitidis serogroup C / serotype 2a (strain ATCC 700532 / DSM 15464 / FAM18).